Consider the following 130-residue polypeptide: Small ribosomal subunit protein uS11 (130 aa).

The protein belongs to the universal ribosomal protein uS11 family. Part of the 30S ribosomal subunit. Interacts with proteins S7 and S18. Binds to IF-3.

In terms of biological role, located on the platform of the 30S subunit, it bridges several disparate RNA helices of the 16S rRNA. Forms part of the Shine-Dalgarno cleft in the 70S ribosome. The sequence is that of Small ribosomal subunit protein uS11 from Ruegeria pomeroyi (strain ATCC 700808 / DSM 15171 / DSS-3) (Silicibacter pomeroyi).